The following is a 78-amino-acid chain: Large ribosomal subunit protein bL28 (78 aa).

Residues 1–25 (MSRVCQVTGKRPTVGNNRSHAKNAT) are disordered.

It belongs to the bacterial ribosomal protein bL28 family.

This chain is Large ribosomal subunit protein bL28, found in Tolumonas auensis (strain DSM 9187 / NBRC 110442 / TA 4).